Consider the following 188-residue polypeptide: Ion-translocating oxidoreductase complex subunit B (188 aa).

Residues 1 to 23 (MIEAAVSMSALGLGLGLLLGVAA) form a hydrophobic region. The region spanning 29–88 (ESPPILDAIEGILPGTNCGACGYPGCRGLAEAMSEGAAPVTACAPGGRDVALALAAIVET) is the 4Fe-4S domain. Cysteine 46, cysteine 49, cysteine 54, cysteine 71, cysteine 113, cysteine 116, cysteine 119, cysteine 123, cysteine 143, cysteine 146, cysteine 149, and cysteine 153 together coordinate [4Fe-4S] cluster. 4Fe-4S ferredoxin-type domains are found at residues 104–133 (TVAFIFEDHCTGCMRCFKRCPTDAIIGANR) and 134–163 (QIHTVVTDACIGCNACIEACPTEAIVARVK).

Belongs to the 4Fe4S bacterial-type ferredoxin family. RnfB subfamily. In terms of assembly, the complex is composed of six subunits: RnfA, RnfB, RnfC, RnfD, RnfE and RnfG. The cofactor is [4Fe-4S] cluster.

Its subcellular location is the cellular chromatophore membrane. Functionally, part of a membrane-bound complex that couples electron transfer with translocation of ions across the membrane. The sequence is that of Ion-translocating oxidoreductase complex subunit B from Cereibacter sphaeroides (strain ATCC 17029 / ATH 2.4.9) (Rhodobacter sphaeroides).